The sequence spans 158 residues: 2-C-methyl-D-erythritol 2,4-cyclodiphosphate synthase (158 aa).

Residues aspartate 8 and histidine 10 each coordinate a divalent metal cation. 4-CDP-2-C-methyl-D-erythritol 2-phosphate is bound by residues 8 to 10 and 34 to 35; these read DVH and HS. Position 42 (histidine 42) interacts with a divalent metal cation. Residues 56-58, 61-65, 100-106, 132-135, and phenylalanine 139 each bind 4-CDP-2-C-methyl-D-erythritol 2-phosphate; these read DIG, FPDTD, AQKPKML, and TTEE.

The protein belongs to the IspF family. As to quaternary structure, homotrimer. A divalent metal cation is required as a cofactor.

It carries out the reaction 4-CDP-2-C-methyl-D-erythritol 2-phosphate = 2-C-methyl-D-erythritol 2,4-cyclic diphosphate + CMP. It participates in isoprenoid biosynthesis; isopentenyl diphosphate biosynthesis via DXP pathway; isopentenyl diphosphate from 1-deoxy-D-xylulose 5-phosphate: step 4/6. In terms of biological role, involved in the biosynthesis of isopentenyl diphosphate (IPP) and dimethylallyl diphosphate (DMAPP), two major building blocks of isoprenoid compounds. Catalyzes the conversion of 4-diphosphocytidyl-2-C-methyl-D-erythritol 2-phosphate (CDP-ME2P) to 2-C-methyl-D-erythritol 2,4-cyclodiphosphate (ME-CPP) with a corresponding release of cytidine 5-monophosphate (CMP). In Clostridium beijerinckii (strain ATCC 51743 / NCIMB 8052) (Clostridium acetobutylicum), this protein is 2-C-methyl-D-erythritol 2,4-cyclodiphosphate synthase.